The primary structure comprises 171 residues: Ferritin heavy chain (171 aa).

Met-1 carries the N-acetylmethionine modification. N-acetylthreonine; in Ferritin heavy chain, N-terminally processed is present on Thr-2. Positions 11–160 (QNYHQDSEAA…DHITNLRKMG (150 aa)) constitute a Ferritin-like diiron domain. Residues Glu-28, Glu-63, His-66, Glu-108, and Gln-142 each contribute to the Fe cation site.

This sequence belongs to the ferritin family. Oligomer of 24 subunits. There are two types of subunits: L (light) chain and H (heavy) chain. The major chain can be light or heavy, depending on the species and tissue type. The functional molecule forms a roughly spherical shell with a diameter of 12 nm and contains a central cavity into which the insoluble mineral iron core is deposited. Interacts with NCOA4; NCOA4 promotes targeting of the iron-binding ferritin complex to autolysosomes following starvation or iron depletion.

It is found in the cytoplasm. Its subcellular location is the lysosome. The protein localises to the cytoplasmic vesicle. It localises to the autophagosome. It catalyses the reaction 4 Fe(2+) + O2 + 4 H(+) = 4 Fe(3+) + 2 H2O. Its function is as follows. Stores iron in a soluble, non-toxic, readily available form. Important for iron homeostasis. Has ferroxidase activity. Iron is taken up in the ferrous form and deposited as ferric hydroxides after oxidation. Also plays a role in delivery of iron to cells. Mediates iron uptake in capsule cells of the developing kidney. Delivery to lysosomes is mediated by the cargo receptor NCOA4 for autophagic degradation and release of iron. The polypeptide is Ferritin heavy chain (FTH1) (Ovis aries (Sheep)).